Here is a 161-residue protein sequence, read N- to C-terminus: Lincosamide resistance protein (161 aa).

The sequence is that of Lincosamide resistance protein (linA) from Staphylococcus haemolyticus.